The primary structure comprises 126 residues: Histone H2B type 2-E (126 aa).

Low complexity predominate over residues 1 to 12; it reads MPEPAKSAPAPK. Positions 1-32 are disordered; the sequence is MPEPAKSAPAPKKGSKKAVTKAQKKDGKKRKR. P2 bears the N-acetylproline mark. E3 carries the post-translational modification ADP-ribosyl glutamic acid. Residue K6 is modified to N6-(2-hydroxyisobutyryl)lysine; alternate. Position 6 is an N6-(beta-hydroxybutyryl)lysine; alternate (K6). K6 carries the post-translational modification N6-acetyllysine; alternate. An N6-butyryllysine; alternate modification is found at K6. Position 6 is an N6-crotonyllysine; alternate (K6). N6-lactoyllysine; alternate is present on K6. K6 participates in a covalent cross-link: Glycyl lysine isopeptide (Lys-Gly) (interchain with G-Cter in SUMO2); alternate. S7 carries the ADP-ribosylserine modification. K12 carries the post-translational modification N6-(beta-hydroxybutyryl)lysine; alternate. 2 positions are modified to N6-acetyllysine; alternate: K12 and K13. K12 and K13 each carry N6-crotonyllysine; alternate. The residue at position 12 (K12) is an N6-lactoyllysine; alternate. Residue K13 is modified to N6-(2-hydroxyisobutyryl)lysine; alternate. S15 carries the post-translational modification Phosphoserine; by STK4/MST1. An N6-acetyllysine; alternate mark is found at K16, K17, K21, and K24. Residues K16, K17, K21, and K24 each carry the N6-crotonyllysine; alternate modification. Residues K16, K17, K21, and K24 each carry the N6-lactoyllysine; alternate modification. K17 carries the post-translational modification N6-glutaryllysine; alternate. An N6-(2-hydroxyisobutyryl)lysine; alternate mark is found at K21 and K24. Position 21 is an N6-(beta-hydroxybutyryl)lysine; alternate (K21). K21 bears the N6-butyryllysine; alternate mark. A Glycyl lysine isopeptide (Lys-Gly) (interchain with G-Cter in SUMO2); alternate cross-link involves residue K21. Position 25 is an N6-(2-hydroxyisobutyryl)lysine (K25). K35 is subject to N6-(2-hydroxyisobutyryl)lysine; alternate. K35 carries the N6-(beta-hydroxybutyryl)lysine; alternate modification. Residue K35 is modified to N6-crotonyllysine; alternate. K35 is modified (N6-glutaryllysine; alternate). Position 35 is an N6-succinyllysine; alternate (K35). Residue K35 forms a Glycyl lysine isopeptide (Lys-Gly) (interchain with G-Cter in ubiquitin); alternate linkage. E36 is modified (polyADP-ribosyl glutamic acid). A Phosphoserine; by AMPK modification is found at S37. Residues K44, K47, and K58 each carry the N6-(2-hydroxyisobutyryl)lysine; alternate modification. N6-lactoyllysine; alternate is present on K44. N6-glutaryllysine; alternate occurs at positions 44 and 47. Residue K47 is modified to N6-methyllysine; alternate. N6,N6-dimethyllysine; alternate is present on K58. Residue R80 is modified to Dimethylated arginine. K86 is subject to N6-(2-hydroxyisobutyryl)lysine; alternate. K86 carries the post-translational modification N6-acetyllysine; alternate. K86 bears the N6-lactoyllysine; alternate mark. K86 carries the post-translational modification N6,N6,N6-trimethyllysine; alternate. R87 and R93 each carry omega-N-methylarginine. K109 is subject to N6-(2-hydroxyisobutyryl)lysine; alternate. Position 109 is an N6-lactoyllysine; alternate (K109). An N6-glutaryllysine; alternate modification is found at K109. K109 carries the N6-methyllysine; alternate modification. O-linked (GlcNAc) serine glycosylation occurs at S113. Residue T116 is modified to Phosphothreonine. An N6-(2-hydroxyisobutyryl)lysine; alternate mark is found at K117 and K121. K117 bears the N6-(beta-hydroxybutyryl)lysine; alternate mark. N6-lactoyllysine; alternate occurs at positions 117 and 121. An N6-glutaryllysine; alternate mark is found at K117 and K121. N6-succinyllysine; alternate occurs at positions 117 and 121. N6-methylated lysine; alternate is present on K117. K121 participates in a covalent cross-link: Glycyl lysine isopeptide (Lys-Gly) (interchain with G-Cter in ubiquitin); alternate.

It belongs to the histone H2B family. As to quaternary structure, the nucleosome is a histone octamer containing two molecules each of H2A, H2B, H3 and H4 assembled in one H3-H4 heterotetramer and two H2A-H2B heterodimers. The octamer wraps approximately 147 bp of DNA. In terms of processing, monoubiquitination at Lys-35 (H2BK34Ub) by the MSL1/MSL2 dimer is required for histone H3 'Lys-4' (H3K4me) and 'Lys-79' (H3K79me) methylation and transcription activation at specific gene loci, such as HOXA9 and MEIS1 loci. Similarly, monoubiquitination at Lys-121 (H2BK120Ub) by the RNF20/40 complex gives a specific tag for epigenetic transcriptional activation and is also prerequisite for histone H3 'Lys-4' and 'Lys-79' methylation. It also functions cooperatively with the FACT dimer to stimulate elongation by RNA polymerase II. H2BK120Ub also acts as a regulator of mRNA splicing: deubiquitination by USP49 is required for efficient cotranscriptional splicing of a large set of exons. Phosphorylated on Ser-15 (H2BS14ph) by STK4/MST1 during apoptosis; which facilitates apoptotic chromatin condensation. Also phosphorylated on Ser-15 in response to DNA double strand breaks (DSBs), and in correlation with somatic hypermutation and immunoglobulin class-switch recombination. Phosphorylation at Ser-37 (H2BS36ph) by AMPK in response to stress promotes transcription. Post-translationally, ADP-ribosylated by PARP1 or PARP2 on Ser-7 (H2BS6ADPr) in response to DNA damage. H2BS6ADPr promotes recruitment of CHD1L. Mono-ADP-ribosylated on Glu-3 (H2BE2ADPr) by PARP3 in response to single-strand breaks. Poly ADP-ribosylation on Glu-36 (H2BE35ADPr) by PARP1 regulates adipogenesis: it inhibits phosphorylation at Ser-37 (H2BS36ph), thereby blocking expression of pro-adipogenetic genes. In terms of processing, crotonylation (Kcr) is specifically present in male germ cells and marks testis-specific genes in post-meiotic cells, including X-linked genes that escape sex chromosome inactivation in haploid cells. Crotonylation marks active promoters and enhancers and confers resistance to transcriptional repressors. It is also associated with post-meiotically activated genes on autosomes. GlcNAcylation at Ser-113 promotes monoubiquitination of Lys-121. It fluctuates in response to extracellular glucose, and associates with transcribed genes. Post-translationally, lactylated in macrophages by EP300/P300 by using lactoyl-CoA directly derived from endogenous or exogenous lactate, leading to stimulates gene transcription.

The protein resides in the nucleus. The protein localises to the chromosome. Functionally, core component of nucleosome. Nucleosomes wrap and compact DNA into chromatin, limiting DNA accessibility to the cellular machineries which require DNA as a template. Histones thereby play a central role in transcription regulation, DNA repair, DNA replication and chromosomal stability. DNA accessibility is regulated via a complex set of post-translational modifications of histones, also called histone code, and nucleosome remodeling. Its function is as follows. Has broad antibacterial activity. May contribute to the formation of the functional antimicrobial barrier of the colonic epithelium, and to the bactericidal activity of amniotic fluid. This Pongo abelii (Sumatran orangutan) protein is Histone H2B type 2-E.